The primary structure comprises 360 residues: tRNA (guanine(37)-N(1))-methyltransferase (360 aa).

S-adenosyl-L-methionine-binding positions include Arg-197, 235-236, and Asn-283; that span reads DL.

It belongs to the class I-like SAM-binding methyltransferase superfamily. TRM5/TYW2 family. As to quaternary structure, monomer.

The protein resides in the mitochondrion matrix. Its subcellular location is the nucleus. It is found in the cytoplasm. The enzyme catalyses guanosine(37) in tRNA + S-adenosyl-L-methionine = N(1)-methylguanosine(37) in tRNA + S-adenosyl-L-homocysteine + H(+). Functionally, specifically methylates the N1 position of guanosine-37 in various cytoplasmic and mitochondrial tRNAs. Methylation is not dependent on the nature of the nucleoside 5' of the target nucleoside. This is the first step in the biosynthesis of wybutosine (yW), a modified base adjacent to the anticodon of tRNAs and required for accurate decoding. This chain is tRNA (guanine(37)-N(1))-methyltransferase, found in Encephalitozoon cuniculi (strain GB-M1) (Microsporidian parasite).